A 224-amino-acid chain; its full sequence is MAFRNPMYQLSNVDDIDSEVLNSRFLSETKDDGFSRRRTTLAVCATKKDLYLYGTTPAGGAEWCSEVLERTRPRIAHKRQRRRHVPRWISDSFRTCLPSPSGKWKEQTANEGEGRVKSSWLAACDERIGIAEPTNYWHGIVRTEDDSSKTLYLIPETWEDVHLKEGFVAIIDLAAERLQCSKLILFVDKNLSALSYLVKSLHWVGFEPVPHLDCVDHVLFGMEL.

The protein belongs to the ODC antizyme family. In terms of assembly, interacts with ODC and thereby sterically blocks ODC homodimerization.

In terms of biological role, ornithine decarboxylase (ODC) antizyme protein that negatively regulates ODC activity and intracellular polyamine biosynthesis in response to increased intracellular polyamine levels. Binds to ODC monomers, inhibiting the assembly of the functional ODC homodimer, and targets the monomers for ubiquitin-independent proteolytic destruction by the 26S proteasome. This chain is Ornithine decarboxylase antizyme (spa1), found in Schizosaccharomyces octosporus (Fission yeast).